Consider the following 560-residue polypeptide: Nucleoprotein (560 aa).

Residues 53–236 (MRKDKRTDTD…ITQEQSQINV (184 aa)) are binding site for the cap structure m7GTP. The tract at residues 333–353 (LTDTGSPNHPPVRNGGSPRLS) is disordered. Aspartate 379 and glutamate 381 together coordinate Mn(2+). Zn(2+)-binding residues include glutamate 389, cysteine 496, histidine 499, and cysteine 520. Aspartate 524 lines the Mn(2+) pocket.

It belongs to the arenaviridae nucleocapsid protein family. As to quaternary structure, homomultimerizes to form the nucleocapsid. Binds to viral genomic RNA. Interacts with glycoprotein G2. Interacts with protein Z; this interaction probably directs the encapsidated genome to budding sites. Interacts with protein L; this interaction does not interfere with Z-L interaction. Interacts with host IKBKE (via Protein kinase domain); the interaction inhibits IKBKE kinase activity.

The protein resides in the virion. The protein localises to the host cytoplasm. Its function is as follows. Encapsidates the genome, protecting it from nucleases. The encapsidated genomic RNA is termed the nucleocapsid (NC). Serves as template for viral transcription and replication. The increased presence of protein N in host cell does not seem to trigger the switch from transcription to replication as observed in other negative strain RNA viruses. Through the interaction with host IKBKE, strongly inhibits the phosphorylation and nuclear translocation of host IRF3, a protein involved in interferon activation pathway, leading to the inhibition of interferon-beta and IRF3-dependent promoters activation. Also encodes a functional 3'-5' exoribonuclease that degrades preferentially dsRNA substrates and thereby participates in the suppression of interferon induction. The polypeptide is Nucleoprotein (Pirital mammarenavirus (isolate Rat/Venezuela/VAV-488/1995) (PIRV)).